We begin with the raw amino-acid sequence, 361 residues long: Molybdopterin synthase catalytic subunit (361 aa).

Residues 101-102 (HR), K117, and 124-126 (KKE) each bind substrate.

Belongs to the MoaE family. MOCS2B subfamily. In terms of assembly, heterotetramer; composed of 2 small (Mocs2A) and 2 large (Mocs2B) subunits.

The protein resides in the cytoplasm. It carries out the reaction 2 [molybdopterin-synthase sulfur-carrier protein]-C-terminal-Gly-aminoethanethioate + cyclic pyranopterin phosphate + H2O = molybdopterin + 2 [molybdopterin-synthase sulfur-carrier protein]-C-terminal Gly-Gly + 2 H(+). Its pathway is cofactor biosynthesis; molybdopterin biosynthesis. In terms of biological role, catalytic subunit of the molybdopterin synthase complex, a complex that catalyzes the conversion of precursor Z into molybdopterin. Acts by mediating the incorporation of 2 sulfur atoms from thiocarboxylated Mocs2A into precursor Z to generate a dithiolene group. The polypeptide is Molybdopterin synthase catalytic subunit (Drosophila pseudoobscura pseudoobscura (Fruit fly)).